A 97-amino-acid polypeptide reads, in one-letter code: Large ribosomal subunit protein eL21 (97 aa).

A disordered region spans residues Met1–Pro26. Residues Ser9 to Gln21 are compositionally biased toward basic residues.

It belongs to the eukaryotic ribosomal protein eL21 family.

This Methanococcus maripaludis (strain C5 / ATCC BAA-1333) protein is Large ribosomal subunit protein eL21.